A 310-amino-acid chain; its full sequence is Protein-L-isoaspartate O-methyltransferase (310 aa).

Disordered stretches follow at residues 1–42 (MSGE…AADK) and 64–90 (SAAA…APSV). Residues 14-32 (EDLKRAPRKSEGRAGERHA) are compositionally biased toward basic and acidic residues. Positions 64-81 (SAAAKPATAPKPTALKPA) are enriched in low complexity. Residue S157 is part of the active site.

Belongs to the methyltransferase superfamily. L-isoaspartyl/D-aspartyl protein methyltransferase family.

It is found in the cytoplasm. The catalysed reaction is [protein]-L-isoaspartate + S-adenosyl-L-methionine = [protein]-L-isoaspartate alpha-methyl ester + S-adenosyl-L-homocysteine. Its function is as follows. Catalyzes the methyl esterification of L-isoaspartyl residues in peptides and proteins that result from spontaneous decomposition of normal L-aspartyl and L-asparaginyl residues. It plays a role in the repair and/or degradation of damaged proteins. The chain is Protein-L-isoaspartate O-methyltransferase from Burkholderia lata (strain ATCC 17760 / DSM 23089 / LMG 22485 / NCIMB 9086 / R18194 / 383).